The following is a 146-amino-acid chain: Snaclec stejaggregin-B subunit beta-1 (146 aa).

An N-terminal signal peptide occupies residues 1-23 (MGRFIFVSFGLLVVFLSLSGTGA). Disulfide bonds link C25/C36, C53/C142, and C119/C134. Residues 32-143 (YDLYCYRVFQ…CSQTYPFVCK (112 aa)) form the C-type lectin domain.

Belongs to the snaclec family. As to quaternary structure, heteromultimer; disulfide-linked. In terms of tissue distribution, expressed by the venom gland.

The protein resides in the secreted. Functionally, interferes with one step of hemostasis (modulation of platelet aggregation, or coagulation cascade, for example). In Trimeresurus stejnegeri (Chinese green tree viper), this protein is Snaclec stejaggregin-B subunit beta-1.